We begin with the raw amino-acid sequence, 385 residues long: Elongation factor Ts, mitochondrial (385 aa).

The transit peptide at 1 to 50 (MAWSQSARKPMIGLLFRAQQHGARGYSYSAFQAHLSSSNVDQSATLLRRF) directs the protein to the mitochondrion.

Belongs to the EF-Ts family.

The protein localises to the mitochondrion. In terms of biological role, associates with the EF-Tu.GDP complex and induces the exchange of GDP to GTP. It remains bound to the aminoacyl-tRNA.EF-Tu.GTP complex up to the GTP hydrolysis stage on the ribosome. In Oryza sativa subsp. indica (Rice), this protein is Elongation factor Ts, mitochondrial.